The chain runs to 281 residues: MSHGTYYECEPRGGQQPLEFSGGRAGPGELGDMCEHEASIDLSAYIESGEEQLLSDLFAMKPTPEARSLKGPGTPSFPHYLPADPRPFAYPSHTFGPDRKALGPGIYSNPGSYDPRAVAVKEEPRGPEGNRGTGRGSYNPLQYQVAHCGQTAVHLPPTLAAPGQPLRVLKAPVAAAAPPCSPLLKAPSPAGPSHKGKKAVNKDSLEYRLRRERNNIAVRKSRDKAKRRIMETQQKVLEYMAENERLRSRVDQLTQELDTLRNLFRQIPEAASLIKGVGGCS.

The tract at residues 1–30 (MSHGTYYECEPRGGQQPLEFSGGRAGPGEL) is disordered. Lys121 participates in a covalent cross-link: Glycyl lysine isopeptide (Lys-Gly) (interchain with G-Cter in SUMO2). Ser181 bears the Phosphoserine mark. A bZIP domain is found at 204–267 (SLEYRLRRER…DTLRNLFRQI (64 aa)). The interval 208-245 (RLRRERNNIAVRKSRDKAKRRIMETQQKVLEYMAENER) is basic motif. The leucine-zipper stretch occupies residues 246 to 267 (LRSRVDQLTQELDTLRNLFRQI).

The protein belongs to the bZIP family. C/EBP subfamily. In terms of assembly, binds DNA as a homodimer and as a heterodimer. Can form stable heterodimers with CEBPA, CEBPB and CEBPD. Interacts with GATA1 and SPI1. Interacts with SMARCD2.

It is found in the nucleus. Transcriptional activator. C/EBP are DNA-binding proteins that recognize two different motifs: the CCAAT homology common to many promoters and the enhanced core homology common to many enhancers. Required for the promyelocyte-myelocyte transition in myeloid differentiation. This Rattus norvegicus (Rat) protein is CCAAT/enhancer-binding protein epsilon (Cebpe).